Reading from the N-terminus, the 193-residue chain is ATP-dependent Clp protease proteolytic subunit 1 (193 aa).

Serine 98 functions as the Nucleophile in the catalytic mechanism. Histidine 123 is an active-site residue.

Belongs to the peptidase S14 family. Fourteen ClpP subunits assemble into 2 heptameric rings which stack back to back to give a disk-like structure with a central cavity, resembling the structure of eukaryotic proteasomes.

The protein localises to the cytoplasm. The enzyme catalyses Hydrolysis of proteins to small peptides in the presence of ATP and magnesium. alpha-casein is the usual test substrate. In the absence of ATP, only oligopeptides shorter than five residues are hydrolyzed (such as succinyl-Leu-Tyr-|-NHMec, and Leu-Tyr-Leu-|-Tyr-Trp, in which cleavage of the -Tyr-|-Leu- and -Tyr-|-Trp bonds also occurs).. Functionally, cleaves peptides in various proteins in a process that requires ATP hydrolysis. Has a chymotrypsin-like activity. Plays a major role in the degradation of misfolded proteins. This chain is ATP-dependent Clp protease proteolytic subunit 1, found in Bacillus cereus (strain ZK / E33L).